Here is a 121-residue protein sequence, read N- to C-terminus: Fluoride-specific ion channel FluC 1 (121 aa).

The next 4 membrane-spanning stretches (helical) occupy residues 3–23, 35–55, 64–84, and 92–112; these read YVYI…ISFL, VANL…IAFF, AITT…LELI, and FITL…LCYV. Na(+) contacts are provided by G71 and T74.

It belongs to the fluoride channel Fluc/FEX (TC 1.A.43) family.

The protein localises to the cell membrane. It carries out the reaction fluoride(in) = fluoride(out). Its activity is regulated as follows. Na(+) is not transported, but it plays an essential structural role and its presence is essential for fluoride channel function. Fluoride-specific ion channel. Important for reducing fluoride concentration in the cell, thus reducing its toxicity. The chain is Fluoride-specific ion channel FluC 1 from Staphylococcus aureus (strain bovine RF122 / ET3-1).